The primary structure comprises 314 residues: Acetyl-coenzyme A carboxylase carboxyl transferase subunit beta (314 aa).

The region spanning 24–293 (LWIKCPDTGQ…IDAAPEPSPA (270 aa)) is the CoA carboxyltransferase N-terminal domain. The disordered stretch occupies residues 283–314 (EIDAAPEPSPAAEEPAEPMPAPEAAAPSAPPA). 2 stretches are compositionally biased toward low complexity: residues 284–295 (IDAAPEPSPAAE) and 304–314 (PEAAAPSAPPA).

The protein belongs to the AccD/PCCB family. As to quaternary structure, acetyl-CoA carboxylase is a heterohexamer composed of biotin carboxyl carrier protein (AccB), biotin carboxylase (AccC) and two subunits each of ACCase subunit alpha (AccA) and ACCase subunit beta (AccD).

It is found in the cytoplasm. The catalysed reaction is N(6)-carboxybiotinyl-L-lysyl-[protein] + acetyl-CoA = N(6)-biotinyl-L-lysyl-[protein] + malonyl-CoA. Its pathway is lipid metabolism; malonyl-CoA biosynthesis; malonyl-CoA from acetyl-CoA: step 1/1. Its function is as follows. Component of the acetyl coenzyme A carboxylase (ACC) complex. Biotin carboxylase (BC) catalyzes the carboxylation of biotin on its carrier protein (BCCP) and then the CO(2) group is transferred by the transcarboxylase to acetyl-CoA to form malonyl-CoA. The protein is Acetyl-coenzyme A carboxylase carboxyl transferase subunit beta of Nitrobacter hamburgensis (strain DSM 10229 / NCIMB 13809 / X14).